Reading from the N-terminus, the 43-residue chain is ERDSCVEKSKCGKYGYYGQCDECCKKAGDRAGTCVYYKCKCNP.

4 cysteine pairs are disulfide-bonded: C5/C23, C11/C34, C20/C39, and C24/C41.

Expressed by the venom gland.

It is found in the secreted. Functionally, reversibly blocks Kv11/ERG potassium channels. Is less toxic than ergtoxin (AC Q86QT3). The chain is Potassium channel toxin gamma-KTx 4.12 from Centruroides sculpturatus (Arizona bark scorpion).